The primary structure comprises 179 residues: Large ribosomal subunit protein uL5 (179 aa).

Belongs to the universal ribosomal protein uL5 family. As to quaternary structure, part of the 50S ribosomal subunit; part of the 5S rRNA/L5/L18/L25 subcomplex. Contacts the 5S rRNA and the P site tRNA. Forms a bridge to the 30S subunit in the 70S ribosome.

In terms of biological role, this is one of the proteins that bind and probably mediate the attachment of the 5S RNA into the large ribosomal subunit, where it forms part of the central protuberance. In the 70S ribosome it contacts protein S13 of the 30S subunit (bridge B1b), connecting the 2 subunits; this bridge is implicated in subunit movement. Contacts the P site tRNA; the 5S rRNA and some of its associated proteins might help stabilize positioning of ribosome-bound tRNAs. The chain is Large ribosomal subunit protein uL5 from Histophilus somni (strain 129Pt) (Haemophilus somnus).